The chain runs to 1561 residues: ABC-type transporter phomO' (1561 aa).

Transmembrane regions (helical) follow at residues leucine 34–alanine 54, cysteine 110–valine 130, serine 139–phenylalanine 159, serine 172–valine 192, glycine 202–valine 222, leucine 314–alanine 334, and glycine 358–tryptophan 378. The region spanning leucine 326–alanine 599 is the ABC transmembrane type-1 1 domain. Asparagine 384 carries an N-linked (GlcNAc...) asparagine glycan. Helical transmembrane passes span leucine 428–leucine 448, valine 452–tyrosine 472, leucine 535–phenylalanine 555, and leucine 577–phenylalanine 597. In terms of domain architecture, ABC transporter 1 spans isoleucine 645–asparagine 871. Asparagine 647 carries N-linked (GlcNAc...) asparagine glycosylation. An ATP-binding site is contributed by glycine 678–serine 685. N-linked (GlcNAc...) asparagine glycosylation is present at asparagine 721. The segment at tyrosine 853 to threonine 899 is disordered. A run of 4 helical transmembrane segments spans residues serine 913–leucine 933, valine 969–leucine 989, leucine 1037–isoleucine 1054, and leucine 1147–leucine 1167. The region spanning valine 920 to threonine 1209 is the ABC transmembrane type-1 2 domain. Residue asparagine 1189 is glycosylated (N-linked (GlcNAc...) asparagine). Positions aspartate 1229–aspartate 1238 are enriched in basic and acidic residues. The disordered stretch occupies residues aspartate 1229 to glutamate 1298. The span at tyrosine 1269–aspartate 1280 shows a compositional bias: acidic residues. Residues histidine 1297–serine 1545 form the ABC transporter 2 domain. Residue glycine 1333–serine 1340 coordinates ATP. A glycan (N-linked (GlcNAc...) asparagine) is linked at asparagine 1496.

Belongs to the ABC transporter superfamily. ABCC family. Conjugate transporter (TC 3.A.1.208) subfamily.

It is found in the membrane. ABC-type transporter; part of the gene cluster that mediates the biosynthesis of the phomopsins, a group of hexapeptide mycotoxins which infects lupins and causes lupinosis disease in livestock. The polypeptide is ABC-type transporter phomO' (Diaporthe leptostromiformis (Lupinosis disease fungus)).